The chain runs to 384 residues: L-type lectin-like domain-containing protein C4F6.05c (384 aa).

Positions 1–19 (MKFCSLFHVLSFCCTLAYA) are cleaved as a signal peptide. Positions 20–224 (VPKSQFLQLH…DLVALSNLNI (205 aa)) constitute an L-type lectin-like domain. Residues 20–353 (VPKSQFLQLH…AMGNAYSPYN (334 aa)) are Extracellular-facing. Residues 227–251 (PDTSNNENLNPTSNTKQSVGDNTSP) are disordered. Residues 354–374 (LTNFMVFLLLGAIVSYGIMLV) form a helical membrane-spanning segment. The Cytoplasmic segment spans residues 375-384 (RRDRRRHKYL).

It is found in the membrane. The protein localises to the endoplasmic reticulum. Its subcellular location is the golgi apparatus. The polypeptide is L-type lectin-like domain-containing protein C4F6.05c (Schizosaccharomyces pombe (strain 972 / ATCC 24843) (Fission yeast)).